We begin with the raw amino-acid sequence, 182 residues long: Interferon gamma 1 (182 aa).

Positions 1–21 are cleaved as a signal peptide; the sequence is MIAQNMTIFFWGVCLLTSGWA. Residue N93 is glycosylated (N-linked (GlcNAc...) asparagine).

It belongs to the type II (or gamma) interferon family. As to quaternary structure, homodimer. In terms of tissue distribution, highly expressed in spleen. Also detected at lower levels in brain, gill, kidney, heart, intestine and muscle. In immune cell populations, has highest expression in peripheral blood leukocytes and splenocytes. Detected in kidney-derived monocytes, neutrophils, macrophages and leukocytes.

The protein resides in the secreted. In terms of biological role, cytokine which binds to interferon gamma receptor 1-like (ifngr1l). Has activating effects on primary macrophages and neutrophils. Induces nitric oxide production and phagocytic responses in macrophages. Primes macrophages and neutrophils for production of reactive oxygen intermediates (ROI). Stimulates phosphorylation and nuclear localization of the JAK/STAT signal transducer stat1. Promotes increased expression of a number of genes important for macrophage activity, including the interferon regulatory factors irf1, irf2, irf8 and irf9. The polypeptide is Interferon gamma 1 (Carassius auratus (Goldfish)).